The primary structure comprises 383 residues: Presenilin-associated rhomboid-like protein A, mitochondrial (383 aa).

Residues 1 to 37 (MAWRSCFMKWTQINSINASSLCPKSTRLNIHPQQRCG) constitute a mitochondrion transit peptide. Residues 35-75 (RCGFRKTERPSESKKGVQETEAEAGGHNRAVPPKPVPPLPP) form a disordered region. Topologically, residues 38–83 (FRKTERPSESKKGVQETEAEAGGHNRAVPPKPVPPLPPRRPHQLFR) are mitochondrial matrix. A compositionally biased stretch (basic and acidic residues) spans 39–52 (RKTERPSESKKGVQ). The segment covering 66–75 (PPKPVPPLPP) has biased composition (pro residues). A helical transmembrane segment spans residues 84–104 (PLVFTVGFTGCSFGAAAILQY). The Mitochondrial intermembrane portion of the chain corresponds to 105–168 (ESVKSRVQLA…FWSGLSEGQK (64 aa)). The helical transmembrane segment at 169–189 (TVTGIIALNTVVLCCWRVPAM) threads the bilayer. Residues 190–219 (QRFLVKYFTSNPASKTRCLPMVLSSFSHYS) are Mitochondrial matrix-facing. Residues 220–240 (VIHMVVNMYVLWTFSSSIVSL) traverse the membrane as a helical segment. The Mitochondrial intermembrane portion of the chain corresponds to 241-245 (LGREQ). A helical transmembrane segment spans residues 246 to 266 (FLALYLSGGVISTFVSYVFKT). At 267-271 (ATGRL) the chain is on the mitochondrial matrix side. The helical transmembrane segment at 272-292 (GPSLGASGSIMTVLAAVCTKI) threads the bilayer. The active-site Nucleophile is Ser278. At 293–298 (PEAKLG) the chain is on the mitochondrial intermembrane side. A helical membrane pass occupies residues 299–319 (IVLLPVISFSAGNALKALVAL). At 320–334 (DIAGLVLGWRFFDHA) the chain is on the mitochondrial matrix side. A helical transmembrane segment spans residues 335 to 355 (AHLGGALFGVWYIGYGHELIW). Residue His336 is part of the active site. Topologically, residues 356-383 (RKREPLIKFWHELRNMSPGRPGPGGGGG) are mitochondrial intermembrane.

The protein belongs to the peptidase S54 family.

The protein resides in the mitochondrion inner membrane. It catalyses the reaction Cleaves type-1 transmembrane domains using a catalytic dyad composed of serine and histidine that are contributed by different transmembrane domains.. Functionally, required for the control of apoptosis during postnatal growth. Essential for proteolytic processing of an antiapoptotic form of opa1 which prevents the release of mitochondrial cytochrome c in response to intrinsic apoptotic signals. The polypeptide is Presenilin-associated rhomboid-like protein A, mitochondrial (parla) (Danio rerio (Zebrafish)).